The chain runs to 103 residues: Histone H4 (103 aa).

A compositionally biased stretch (gly residues) spans methionine 1–glycine 14. Residues methionine 1–arginine 20 form a disordered region. N-acetylserine is present on serine 2. Residue lysine 17 is modified to N6-acetyllysine. Residues lysine 17–lysine 21 mediate DNA binding. Lysine 21 is modified (N6-methyllysine).

Belongs to the histone H4 family. The nucleosome is a histone octamer containing two molecules each of H2A, H2B, H3 and H4 assembled in one H3-H4 heterotetramer and two H2A-H2B heterodimers. The octamer wraps approximately 147 bp of DNA.

It localises to the nucleus. It is found in the chromosome. Its function is as follows. Core component of nucleosome. Nucleosomes wrap and compact DNA into chromatin, limiting DNA accessibility to the cellular machineries which require DNA as a template. Histones thereby play a central role in transcription regulation, DNA repair, DNA replication and chromosomal stability. DNA accessibility is regulated via a complex set of post-translational modifications of histones, also called histone code, and nucleosome remodeling. This is Histone H4 from Eucalyptus globulus (Tasmanian blue gum).